The primary structure comprises 104 residues: Protein METHYLENE BLUE SENSITIVITY 2 (104 aa).

Residues 1-11 (MTGKAKPKKHT) show a composition bias toward basic residues. 2 disordered regions span residues 1 to 46 (MTGK…GHAK) and 64 to 104 (IHHE…SLKK). Basic and acidic residues-rich tracts occupy residues 36–46 (RTGKEKGGHAK) and 73–82 (LTYEEPRNLH).

Its subcellular location is the nucleus. It is found in the cytoplasm. The protein localises to the stress granule. Functionally, required for acclimation to reactive oxygen species (ROS) responses downstream of beta-cyclocitral, including singlet oxygen 1O(2) detoxification reactions, especially upon light-mediated photooxidative stress, and leading to programmed cell death. Prevents leaf senescence. This chain is Protein METHYLENE BLUE SENSITIVITY 2, found in Arabidopsis thaliana (Mouse-ear cress).